Here is a 540-residue protein sequence, read N- to C-terminus: Transcription termination/antitermination protein NusA (540 aa).

An S1 motif domain is found at 144–214; that stretch reads GQVIEARVED…SMWPITLSRS (71 aa). Residues 319–386 enclose the KH domain; sequence DTSIEIVVPA…QGIFGIKKRR (68 aa). Positions 457–540 are disordered; sequence VAAPTPTPAP…KQTFDNFDDL (84 aa). Residues 461 to 489 are compositionally biased toward pro residues; sequence TPTPAPQPTPAPTKVEPVPPPVSVTPKPI. Over residues 512–522 the composition is skewed to basic and acidic residues; that stretch reads DDSKTKPEKSS. Over residues 523–540 the composition is skewed to polar residues; sequence AKTNTPQTKQTFDNFDDL.

This sequence belongs to the NusA family. As to quaternary structure, monomer. Binds directly to the core enzyme of the DNA-dependent RNA polymerase and to nascent RNA.

Its subcellular location is the cytoplasm. Its function is as follows. Participates in both transcription termination and antitermination. This chain is Transcription termination/antitermination protein NusA, found in Mycoplasma pneumoniae (strain ATCC 29342 / M129 / Subtype 1) (Mycoplasmoides pneumoniae).